The sequence spans 57 residues: Alpha-conotoxin-like Sm1.2 (57 aa).

The N-terminal stretch at 1–16 is a signal peptide; that stretch reads MFTVFLLVVLATTVVS. Positions 17-42 are excised as a propeptide; sequence FPSDRESDGANDEARTDEPEEHGPDR. The interval 17-46 is disordered; it reads FPSDRESDGANDEARTDEPEEHGPDRNGCC. A compositionally biased stretch (basic and acidic residues) spans 19 to 41; the sequence is SDRESDGANDEARTDEPEEHGPD. Intrachain disulfides connect Cys45-Cys51 and Cys46-Cys56. Cys56 carries the cysteine amide modification.

Belongs to the conotoxin A superfamily. Expressed by the venom duct.

Its subcellular location is the secreted. Functionally, alpha-conotoxins act on postsynaptic membranes, they bind to the nicotinic acetylcholine receptors (nAChR) and thus inhibit them. The polypeptide is Alpha-conotoxin-like Sm1.2 (Conus stercusmuscarum (Fly-specked cone)).